Consider the following 222-residue polypeptide: uncharacterized protein (222 aa).

The first 20 residues, methionine 1–glycine 20, serve as a signal peptide directing secretion. Cysteine 21 is lipidated: N-palmitoyl cysteine. Cysteine 21 is lipidated: S-diacylglycerol cysteine.

The protein localises to the cell membrane. This is an uncharacterized protein from Escherichia coli O157:H7.